A 72-amino-acid polypeptide reads, in one-letter code: RTCYKTPSVKPETCPHGENICYTETWCDAWCSQRGKREELGCAATCPKVKAGVGIKCCSTDNCDPFPVKNPR.

Cystine bridges form between Cys3–Cys21, Cys14–Cys42, Cys27–Cys31, Cys46–Cys57, and Cys58–Cys63.

Belongs to the three-finger toxin family. Long-chain subfamily. Type II alpha-neurotoxin sub-subfamily. Neurotoxin 4.7.3 differs from 4.9.3 only in that Trp-26 has undergone partial photooxidation. As to expression, expressed by the venom gland.

The protein localises to the secreted. Functionally, binds with high affinity to muscular (alpha-1/CHRNA1) and neuronal (alpha-7/CHRNA7) nicotinic acetylcholine receptor (nAChR) and inhibits acetylcholine from binding to the receptor, thereby impairing neuromuscular and neuronal transmission. The protein is Alpha-elapitoxin-Dv2b of Dendroaspis viridis (Western green mamba).